A 707-amino-acid polypeptide reads, in one-letter code: Transcription termination factor Rho (707 aa).

2 disordered regions span residues 1-38 and 76-321; these read MSDTTDLMGARVEETAAAPATDASAPATGAGSRRRRGT and QAAG…DEIQ. Composition is skewed to low complexity over residues 16 to 31 and 76 to 93; these read AAAPATDASAPATGAG and QAAGGAPAKAAPAAADTA. Basic and acidic residues predominate over residues 107–132; it reads RTGDEAPAEKAEKAGKADKKADKAAA. Over residues 153–163 the composition is skewed to low complexity; sequence ASAEQAAPADD. Residues 176–188 are compositionally biased toward polar residues; sequence DAGSPSATDTTVA. The span at 203–213 shows a compositional bias: low complexity; sequence QQSQGHQQGQG. The segment covering 215–265 has biased composition (basic and acidic residues); it reads ARSDAEGGDGRRRDRRDRGDRDRGDRGDRGDRGDRGDRGERGRDRRNKGDD. The span at 301–315 shows a compositional bias: basic residues; it reads RRGRRGRYRDRRGRR. Residues 331–406 form the Rho RNA-BD domain; it reads LIPVAGILDI…VRLDSVNGMA (76 aa). Residues 449 to 454, 461 to 466, and R492 each bind ATP; these read GKGQRG and KTGKTM.

The protein belongs to the Rho family. As to quaternary structure, homohexamer. The homohexamer assembles into an open ring structure.

Functionally, facilitates transcription termination by a mechanism that involves Rho binding to the nascent RNA, activation of Rho's RNA-dependent ATPase activity, and release of the mRNA from the DNA template. The chain is Transcription termination factor Rho from Streptomyces lividans.